The chain runs to 636 residues: ATP-dependent zinc metalloprotease FtsH (636 aa).

The Cytoplasmic portion of the chain corresponds to 1–12 (MKKLLENLSLWM). A helical transmembrane segment spans residues 13–33 (GIIILVTLLFGQVALNFGFGI). Residues 34-104 (RNEKIQFSEF…VASGDSFLGL (71 aa)) are Periplasmic-facing. Residues 105-125 (LFNILISWFPMLLLIGVWIFF) form a helical membrane-spanning segment. Over 126-636 (MKQMQAGGNK…ESDLDTGDKE (511 aa)) the chain is Cytoplasmic. 197 to 204 (GPPGTGKT) serves as a coordination point for ATP. Histidine 419 contributes to the Zn(2+) binding site. Residue glutamate 420 is part of the active site. Residues histidine 423 and aspartate 497 each contribute to the Zn(2+) site.

It in the central section; belongs to the AAA ATPase family. This sequence in the C-terminal section; belongs to the peptidase M41 family. As to quaternary structure, homohexamer. It depends on Zn(2+) as a cofactor.

Its subcellular location is the cell inner membrane. Functionally, acts as a processive, ATP-dependent zinc metallopeptidase for both cytoplasmic and membrane proteins. Plays a role in the quality control of integral membrane proteins. This is ATP-dependent zinc metalloprotease FtsH from Neorickettsia risticii (strain Illinois).